The chain runs to 385 residues: Citrate synthase (385 aa).

Residues His-223, His-263, and Asp-318 contribute to the active site.

The protein belongs to the citrate synthase family. Homodimer.

It carries out the reaction oxaloacetate + acetyl-CoA + H2O = citrate + CoA + H(+). It participates in carbohydrate metabolism; tricarboxylic acid cycle; isocitrate from oxaloacetate: step 1/2. With respect to regulation, allosterically inhibited by NADH. The chain is Citrate synthase (gltA) from Thermoplasma acidophilum (strain ATCC 25905 / DSM 1728 / JCM 9062 / NBRC 15155 / AMRC-C165).